The chain runs to 100 residues: MMLSPREQEKLLIVVAANLARSRKERGLKLNYPEAISMIAFEILEGARDGKSVSELMQAGREVLTVDDVMDGIADMIHDVQVEATFPDGTKLVTVHQPIK.

It belongs to the urease gamma subunit family. In terms of assembly, heterotrimer of UreA (gamma), UreB (beta) and UreC (alpha) subunits. Three heterotrimers associate to form the active enzyme.

Its subcellular location is the cytoplasm. It catalyses the reaction urea + 2 H2O + H(+) = hydrogencarbonate + 2 NH4(+). It functions in the pathway nitrogen metabolism; urea degradation; CO(2) and NH(3) from urea (urease route): step 1/1. In Lachnoclostridium phytofermentans (strain ATCC 700394 / DSM 18823 / ISDg) (Clostridium phytofermentans), this protein is Urease subunit gamma.